A 403-amino-acid chain; its full sequence is uncharacterized protein (403 aa).

12 consecutive transmembrane segments (helical) span residues 25–47 (IAFFLAGFSTFSTLYCVQPILFL), 62–81 (SLSASTAMMAFGMLFTGPLS), 88–110 (VVMSSSLFLASFCTFCCSNMNSW), 114–136 (IFMRALTGLALSGVAAVAMTYLS), 143–165 (VLSFSIGLYISGNTIGGFLGRFL), 175–197 (WNIALEFISFLAFTSAVLFVYLL), 229–251 (LFFMGCILMGSFITLFNYVGYRL), 256–278 (FFLGQTTIGLLSIIYLIGVYSSP), 290–307 (GVILTLALTMMIFGVLIT), 311–330 (IVLLIIVGLTLFAAGFFAAH), 350–372 (SIYLFSYYLGSSIFGTFSGIFWI), and 376–398 (WLGISIFIITFLCIGILLSIRLL).

It belongs to the major facilitator superfamily.

It is found in the cell membrane. This is an uncharacterized protein from Buchnera aphidicola subsp. Baizongia pistaciae (strain Bp).